A 279-amino-acid polypeptide reads, in one-letter code: Pantothenate synthetase (279 aa).

Position 26-33 (26-33) interacts with ATP; it reads MGGLHEGH. The Proton donor role is filled by His33. Gln57 provides a ligand contact to (R)-pantoate. Position 57 (Gln57) interacts with beta-alanine. An ATP-binding site is contributed by 143 to 146; that stretch reads GKKD. Gln149 contributes to the (R)-pantoate binding site. Residues Val172 and 180–183 each bind ATP; that span reads LSSR.

Belongs to the pantothenate synthetase family. Homodimer.

Its subcellular location is the cytoplasm. It catalyses the reaction (R)-pantoate + beta-alanine + ATP = (R)-pantothenate + AMP + diphosphate + H(+). It participates in cofactor biosynthesis; (R)-pantothenate biosynthesis; (R)-pantothenate from (R)-pantoate and beta-alanine: step 1/1. In terms of biological role, catalyzes the condensation of pantoate with beta-alanine in an ATP-dependent reaction via a pantoyl-adenylate intermediate. This Nitrosospira multiformis (strain ATCC 25196 / NCIMB 11849 / C 71) protein is Pantothenate synthetase.